A 139-amino-acid chain; its full sequence is Basic phospholipase A2 beta-bungarotoxin A2 chain (139 aa).

The N-terminal stretch at Ala1–Ala9 is a signal peptide. A propeptide spanning residues Ala10 to Phe17 is cleaved from the precursor. Tyr45, Gly47, and Gly49 together coordinate Ca(2+). A disulfide bridge connects residues Cys46 and Cys62. The active site involves His65. Asp66 contacts Ca(2+).

It belongs to the phospholipase A2 family. Group I subfamily. D49 sub-subfamily. Heterodimer; disulfide-linked. The A chains have phospholipase A2 activity and the B chains show homology with the basic protease inhibitors. Requires Ca(2+) as cofactor. As to expression, expressed by the venom gland.

The protein resides in the secreted. It catalyses the reaction a 1,2-diacyl-sn-glycero-3-phosphocholine + H2O = a 1-acyl-sn-glycero-3-phosphocholine + a fatty acid + H(+). In terms of biological role, snake venom phospholipase A2 (PLA2) that shows presynaptic neurotoxicity. PLA2 catalyzes the calcium-dependent hydrolysis of the 2-acyl groups in 3-sn-phosphoglycerides. This is Basic phospholipase A2 beta-bungarotoxin A2 chain from Bungarus candidus (Malayan krait).